The chain runs to 191 residues: Probable GTP-binding protein EngB (191 aa).

The EngB-type G domain maps to 13–189; that stretch reads DRLEVAFAGR…RAEIVALLPD (177 aa). GTP is bound by residues 21 to 28, 48 to 52, 67 to 70, 134 to 137, and 168 to 170; these read GRSNVGKS, GRTRE, DLPG, TKTD, and TSS. Positions 28 and 50 each coordinate Mg(2+).

Belongs to the TRAFAC class TrmE-Era-EngA-EngB-Septin-like GTPase superfamily. EngB GTPase family. The cofactor is Mg(2+).

Functionally, necessary for normal cell division and for the maintenance of normal septation. The polypeptide is Probable GTP-binding protein EngB (Maricaulis maris (strain MCS10) (Caulobacter maris)).